Reading from the N-terminus, the 601-residue chain is Elongation factor 4 (601 aa).

One can recognise a tr-type G domain in the interval 5–187 (IRKKNFCIIA…AICKHVPSPR (183 aa)). GTP is bound by residues 17 to 22 (DHGKST) and 134 to 137 (NKID).

This sequence belongs to the TRAFAC class translation factor GTPase superfamily. Classic translation factor GTPase family. LepA subfamily.

It localises to the cell inner membrane. The enzyme catalyses GTP + H2O = GDP + phosphate + H(+). Required for accurate and efficient protein synthesis under certain stress conditions. May act as a fidelity factor of the translation reaction, by catalyzing a one-codon backward translocation of tRNAs on improperly translocated ribosomes. Back-translocation proceeds from a post-translocation (POST) complex to a pre-translocation (PRE) complex, thus giving elongation factor G a second chance to translocate the tRNAs correctly. Binds to ribosomes in a GTP-dependent manner. The protein is Elongation factor 4 of Borrelia garinii subsp. bavariensis (strain ATCC BAA-2496 / DSM 23469 / PBi) (Borreliella bavariensis).